The following is a 396-amino-acid chain: Elongation factor Tu (396 aa).

Residues 10–206 enclose the tr-type G domain; that stretch reads KPHVNVGTIG…ALDTYIPTPE (197 aa). A G1 region spans residues 19–26; the sequence is GHVDHGKT. 19–26 is a GTP binding site; the sequence is GHVDHGKT. T26 provides a ligand contact to Mg(2+). The tract at residues 60–64 is G2; sequence GITIN. The G3 stretch occupies residues 81–84; the sequence is DCPG. Residues 81 to 85 and 136 to 139 each bind GTP; these read DCPGH and NKCD. Residues 136-139 form a G4 region; it reads NKCD. Positions 174–176 are G5; that stretch reads SAK.

It belongs to the TRAFAC class translation factor GTPase superfamily. Classic translation factor GTPase family. EF-Tu/EF-1A subfamily. As to quaternary structure, monomer.

It is found in the cytoplasm. The enzyme catalyses GTP + H2O = GDP + phosphate + H(+). Functionally, GTP hydrolase that promotes the GTP-dependent binding of aminoacyl-tRNA to the A-site of ribosomes during protein biosynthesis. The polypeptide is Elongation factor Tu (Thiomonas delicata (Thiomonas cuprina)).